A 63-amino-acid chain; its full sequence is Large ribosomal subunit protein bL28 (63 aa).

This sequence belongs to the bacterial ribosomal protein bL28 family.

The chain is Large ribosomal subunit protein bL28 from Clostridium kluyveri (strain NBRC 12016).